Consider the following 150-residue polypeptide: D-aminoacyl-tRNA deacylase (150 aa).

Residues 138 to 139 (GP) carry the Gly-cisPro motif, important for rejection of L-amino acids motif.

This sequence belongs to the DTD family. In terms of assembly, homodimer.

The protein resides in the cytoplasm. The catalysed reaction is glycyl-tRNA(Ala) + H2O = tRNA(Ala) + glycine + H(+). It catalyses the reaction a D-aminoacyl-tRNA + H2O = a tRNA + a D-alpha-amino acid + H(+). Its function is as follows. An aminoacyl-tRNA editing enzyme that deacylates mischarged D-aminoacyl-tRNAs. Also deacylates mischarged glycyl-tRNA(Ala), protecting cells against glycine mischarging by AlaRS. Acts via tRNA-based rather than protein-based catalysis; rejects L-amino acids rather than detecting D-amino acids in the active site. By recycling D-aminoacyl-tRNA to D-amino acids and free tRNA molecules, this enzyme counteracts the toxicity associated with the formation of D-aminoacyl-tRNA entities in vivo and helps enforce protein L-homochirality. The polypeptide is D-aminoacyl-tRNA deacylase (Petrotoga mobilis (strain DSM 10674 / SJ95)).